Here is a 91-residue protein sequence, read N- to C-terminus: Pre-early 3 receptor internalization and degradation alpha protein (91 aa).

Residues 1–4 (MIPR) lie on the Cytoplasmic side of the membrane. Residues 1 to 22 (MIPRVLILLTLVALFCACSTLA) constitute a propeptide, signal peptide. The chain crosses the membrane as a helical span at residues 5–25 (VLILLTLVALFCACSTLAAVA). Residues 26 to 34 (HIEVDCIPP) lie on the Lumenal side of the membrane. The chain crosses the membrane as a helical span at residues 35–60 (FTVYLLYGFVTLILICSLVTVVIAFI). At 61–91 (QFIDWVCVRIAYLRHHPQYRDRTIADLLRIL) the chain is on the cytoplasmic side.

This sequence belongs to the adenoviridae E3-RID-alpha family. In terms of assembly, homodimer with only one chain cleaved by signal peptidase. Interacts with E3 RID-beta and E3 CR1-alpha. The signal peptide is only cleaved partially by host signal peptidase. This results in two forms of the protein, one uncleaved with two transmembrane regions, and one cleaved with one transmembrane region.

The protein localises to the host membrane. It localises to the host endoplasmic reticulum. In terms of biological role, prevents infected cell apoptosis induced by the host immune system. Acts by down-regulating a number of cell surface receptors in the tumor necrosis factor (TNF) receptor superfamily, namely FAS, TNFRSF10A/TRAIL receptor 1, and TNFRSF10B/TRAIL receptor 2. Down-regulation of these death receptors protects adenovirus-infected cells from apoptosis induced by the death receptor ligands Fas ligand and TRAIL. RID complex also down-regulates certain tyrosine kinase cell surface receptors, especially the epidermal growth factor receptor (EGFR). RID-mediated Fas and EGFR down-regulation occurs via endocytosis of the receptors into endosomes followed by transport to and degradation within lysosomes. In Homo sapiens (Human), this protein is Pre-early 3 receptor internalization and degradation alpha protein.